Here is an 889-residue protein sequence, read N- to C-terminus: Cytoplasmic aconitate hydratase (889 aa).

Substrate is bound by residues glutamine 86 and aspartate 205–histidine 207. The [4Fe-4S] cluster site is built by cysteine 437, cysteine 503, and cysteine 506. Residues arginine 536, arginine 541, arginine 699, and serine 779 to arginine 780 contribute to the substrate site.

Belongs to the aconitase/IPM isomerase family. Interacts (when associated with the 4Fe-4S) with FBXL5. Interacts with frataxin(81-210). The cofactor is [4Fe-4S] cluster.

The protein resides in the cytoplasm. The protein localises to the cytosol. The catalysed reaction is citrate = D-threo-isocitrate. Bifunctional iron sensor that switches between 2 activities depending on iron availability. Iron deprivation, promotes its mRNA binding activity through which it regulates the expression of genes involved in iron uptake, sequestration and utilization. Binds to iron-responsive elements (IRES) in the untranslated region of target mRNAs preventing for instance the translation of ferritin and aminolevulinic acid synthase and stabilizing the transferrin receptor mRNA. In terms of biological role, conversely, when cellular iron levels are high, binds a 4Fe-4S cluster which precludes RNA binding activity and promotes the aconitase activity, the isomerization of citrate to isocitrate via cis-aconitate. The protein is Cytoplasmic aconitate hydratase (ACO1) of Oryctolagus cuniculus (Rabbit).